Consider the following 313-residue polypeptide: Dihydroorotate dehydrogenase B (NAD(+)), catalytic subunit (313 aa).

FMN contacts are provided by residues serine 21 and 45–46 (KA). Substrate is bound by residues lysine 45 and 69–73 (NAIGL). Residues asparagine 99 and asparagine 127 each coordinate FMN. Asparagine 127 contributes to the substrate binding site. The active-site Nucleophile is the cysteine 130. FMN is bound by residues lysine 165 and isoleucine 191. A substrate-binding site is contributed by 192–193 (NT). Residues glycine 217, 243 to 244 (GG), and 265 to 266 (GT) each bind FMN.

This sequence belongs to the dihydroorotate dehydrogenase family. Type 1 subfamily. In terms of assembly, heterotetramer of 2 PyrK and 2 PyrD type B subunits. The cofactor is FMN.

The protein localises to the cytoplasm. The catalysed reaction is (S)-dihydroorotate + NAD(+) = orotate + NADH + H(+). The protein operates within pyrimidine metabolism; UMP biosynthesis via de novo pathway; orotate from (S)-dihydroorotate (NAD(+) route): step 1/1. Its function is as follows. Catalyzes the conversion of dihydroorotate to orotate with NAD(+) as electron acceptor. The sequence is that of Dihydroorotate dehydrogenase B (NAD(+)), catalytic subunit (pyrD) from Geobacillus kaustophilus (strain HTA426).